The sequence spans 329 residues: tRNA-modifying protein YgfZ (329 aa).

Folate is bound by residues tryptophan 28 and tryptophan 188.

This sequence belongs to the tRNA-modifying YgfZ family.

It is found in the cytoplasm. In terms of biological role, folate-binding protein involved in regulating the level of ATP-DnaA and in the modification of some tRNAs. It is probably a key factor in regulatory networks that act via tRNA modification, such as initiation of chromosomal replication. This is tRNA-modifying protein YgfZ from Photorhabdus laumondii subsp. laumondii (strain DSM 15139 / CIP 105565 / TT01) (Photorhabdus luminescens subsp. laumondii).